The following is a 496-amino-acid chain: MNFELKTLSLAASAAHKCDLLVVLVPEGFLPGSDVLSTMVAHALKQGDLEVKPGKLLQCYAPAGVAARRVVLLGCGAADAHAVRQAMQALSPSFKLPSVKRVALVFGTSAQRGAIGAAVRAVADGSYVYTATKTKAEPRALLRVTLGVPNAGAAQPEFATATAVAAGVEFAREWANRPANHATPTLVANAAKTLAKYPGVQCQVLGPAEVAKLGMGAFLAVAQGSDQPLRLVELRYNGAARTQAPVVLVGKGITFDTGGISLKPAAEMDEMKFDMGGAASVLGVFRALAELRPAINVVGLIPACENMPDGKAVKPGDVVTSMSGQTIEILNTDAEGRLVLCDALTYAARFKPAAVVDIATLTGACVVALGGLRSGLFASDDLLAEQLLSAGDAALDPCWRMPLDDEYAEGLKSNFADMANVAGRAGGSITAAKFLQRFVGDTPWAHLDIAGTAWKGGAAKGATGRPVALLVHYLLDQATVSTVKPKQKTRSRKSVA.

Residues K251 and D256 each contribute to the Mn(2+) site. K263 is an active-site residue. Residues D274, D333, and E335 each coordinate Mn(2+). R337 is a catalytic residue.

The protein belongs to the peptidase M17 family. Requires Mn(2+) as cofactor.

It is found in the cytoplasm. It carries out the reaction Release of an N-terminal amino acid, Xaa-|-Yaa-, in which Xaa is preferably Leu, but may be other amino acids including Pro although not Arg or Lys, and Yaa may be Pro. Amino acid amides and methyl esters are also readily hydrolyzed, but rates on arylamides are exceedingly low.. The catalysed reaction is Release of an N-terminal amino acid, preferentially leucine, but not glutamic or aspartic acids.. Presumably involved in the processing and regular turnover of intracellular proteins. Catalyzes the removal of unsubstituted N-terminal amino acids from various peptides. This chain is Probable cytosol aminopeptidase, found in Acidovorax sp. (strain JS42).